The following is a 205-amino-acid chain: MIGKLKGIIDSYGEDYVILDVQGVGYQVHCASRTLQALPSPGEAATLSIETYVREDQIKLFGFRTDTEREWFRLLQTVQSVGAKVALAVLSTLPPHDLANAIALRDKAAVARTPGVGPKVAERIVTELKDKVPALSAVDPAVVKLSGAIDDNRAPRAVTDAISALVNLGYGQPQAAAAVATASRTAGEDAETAQLIKLGLKELSK.

Residues M1–R64 are domain I. The domain II stretch occupies residues T65–V143. A flexible linker region spans residues K144–A154. The tract at residues A154–K205 is domain III.

This sequence belongs to the RuvA family. In terms of assembly, homotetramer. Forms an RuvA(8)-RuvB(12)-Holliday junction (HJ) complex. HJ DNA is sandwiched between 2 RuvA tetramers; dsDNA enters through RuvA and exits via RuvB. An RuvB hexamer assembles on each DNA strand where it exits the tetramer. Each RuvB hexamer is contacted by two RuvA subunits (via domain III) on 2 adjacent RuvB subunits; this complex drives branch migration. In the full resolvosome a probable DNA-RuvA(4)-RuvB(12)-RuvC(2) complex forms which resolves the HJ.

Its subcellular location is the cytoplasm. The RuvA-RuvB-RuvC complex processes Holliday junction (HJ) DNA during genetic recombination and DNA repair, while the RuvA-RuvB complex plays an important role in the rescue of blocked DNA replication forks via replication fork reversal (RFR). RuvA specifically binds to HJ cruciform DNA, conferring on it an open structure. The RuvB hexamer acts as an ATP-dependent pump, pulling dsDNA into and through the RuvAB complex. HJ branch migration allows RuvC to scan DNA until it finds its consensus sequence, where it cleaves and resolves the cruciform DNA. This is Holliday junction branch migration complex subunit RuvA from Rhodopseudomonas palustris (strain TIE-1).